The sequence spans 418 residues: Histidine--tRNA ligase (418 aa).

It belongs to the class-II aminoacyl-tRNA synthetase family. As to quaternary structure, homodimer.

It is found in the cytoplasm. It catalyses the reaction tRNA(His) + L-histidine + ATP = L-histidyl-tRNA(His) + AMP + diphosphate + H(+). The chain is Histidine--tRNA ligase from Thermosipho africanus (strain TCF52B).